Consider the following 301-residue polypeptide: Multifunctional dioxygenase prhA (301 aa).

Fe cation is bound by residues H130, D132, and H214.

This sequence belongs to the PhyH family. Homodimer. It depends on Fe cation as a cofactor.

The enzyme catalyses preaustinoid A1 + 2-oxoglutarate + O2 = berkeleyone B + succinate + CO2 + H2O. The catalysed reaction is berkeleyone B + 2-oxoglutarate + O2 = berkeleydione + succinate + CO2 + H2O. It carries out the reaction preaustinoid A + 2 2-oxoglutarate + 2 O2 = berkeleytrione + 2 succinate + 2 CO2 + H2O. The protein operates within secondary metabolite biosynthesis; terpenoid biosynthesis. Multifunctional dioxygenase; part of the gene cluster that mediates the biosynthesis of paraherquonin, a meroterpenoid with a unique, highly congested hexacyclic molecular architecture. The first step of the pathway is the synthesis of 3,5-dimethylorsellinic acid (DMOA) by the polyketide synthase prhL. Synthesis of DMOA is followed by farnesylation by the prenyltransferase prhE, methylesterification by the methyl-transferase prhM, epoxidation of the prenyl chain by the flavin-dependent monooxygenase prhF, and cyclization of the farnesyl moiety by the terpene cyclase prhH, to yield the tetracyclic intermediate, protoaustinoid A. The short chain dehydrogenase prhI then oxidizes the C-3 alcohol group of the terpene cyclase product to transform protoaustinoid A into protoaustinoid B. The FAD-binding monooxygenase prhJ catalyzes the oxidation of protoaustinoid B into preaustinoid A which is further oxidized into preaustinoid A1 by FAD-binding monooxygenase phrK. Finally, prhA leads to berkeleydione via the berkeleyone B intermediate. PrhA is a multifunctional dioxygenase that first desaturates at C5-C6 to form berkeleyone B, followed by rearrangement of the A/B-ring to form the cycloheptadiene moiety in berkeleydione. Berkeleydione serves as the key intermediate for the biosynthesis of paraherquonin as well as many other meroterpenoids. The cytochrome P450 monooxygenases prhB, prhD, and prhN, as well as the isomerase prhC, are probably involved in the late stage of paraherquonin biosynthesis, after the production of berkeleydione. Especially prhC might be a multifunctional enzyme that catalyzes the D-ring expansion via intramolecular methoxy rearrangement, as well as the hydrolysis of the expanded D-ring. The sequence is that of Multifunctional dioxygenase prhA from Penicillium brasilianum.